The following is a 333-amino-acid chain: MAKIFYDSDCNLDLLKDKTVAVIGFGSQGHAHALNLRDSGINVVVGLYHGSKSWAKAESHGLKVMTADEATKVADVIMILVNDEKQPKLFKESIEPNLKEGKAIAFAHGFNIHFGQIVPPPYVDVIMIAPKGPGHTVRSQYEEGKGVPALVAVHQDYTGKALDVALAYAKGIGASRAGIILTTFKEETETDLFGEQAVLCGGLTELIKAGFDTLVEAGYQPEIAYFECLHEMKLIVDLIWQGGLSLMRYSISDTAEYGDYMTGKRIITEETRKEMKKVLEEIQNGTFAKKWILENMAGRPEFNSIRKREQNLLIEQVGKELRKMMPWIKPIKE.

Residues 2–182 (AKIFYDSDCN…GASRAGIILT (181 aa)) form the KARI N-terminal Rossmann domain. Residues 25 to 28 (FGSQ), serine 51, serine 53, and 83 to 86 (DEKQ) contribute to the NADP(+) site. Residue histidine 108 is part of the active site. Glycine 134 is an NADP(+) binding site. The KARI C-terminal knotted domain occupies 183 to 328 (TFKEETETDL…KELRKMMPWI (146 aa)). Mg(2+) is bound by residues aspartate 191, glutamate 195, glutamate 227, and glutamate 231. Serine 252 contributes to the substrate binding site.

This sequence belongs to the ketol-acid reductoisomerase family. Requires Mg(2+) as cofactor.

The enzyme catalyses (2R)-2,3-dihydroxy-3-methylbutanoate + NADP(+) = (2S)-2-acetolactate + NADPH + H(+). It catalyses the reaction (2R,3R)-2,3-dihydroxy-3-methylpentanoate + NADP(+) = (S)-2-ethyl-2-hydroxy-3-oxobutanoate + NADPH + H(+). The protein operates within amino-acid biosynthesis; L-isoleucine biosynthesis; L-isoleucine from 2-oxobutanoate: step 2/4. It participates in amino-acid biosynthesis; L-valine biosynthesis; L-valine from pyruvate: step 2/4. Involved in the biosynthesis of branched-chain amino acids (BCAA). Catalyzes an alkyl-migration followed by a ketol-acid reduction of (S)-2-acetolactate (S2AL) to yield (R)-2,3-dihydroxy-isovalerate. In the isomerase reaction, S2AL is rearranged via a Mg-dependent methyl migration to produce 3-hydroxy-3-methyl-2-ketobutyrate (HMKB). In the reductase reaction, this 2-ketoacid undergoes a metal-dependent reduction by NADPH to yield (R)-2,3-dihydroxy-isovalerate. The protein is Ketol-acid reductoisomerase (NADP(+)) of Caldicellulosiruptor bescii (strain ATCC BAA-1888 / DSM 6725 / KCTC 15123 / Z-1320) (Anaerocellum thermophilum).